The sequence spans 865 residues: Xylosyltransferase 2 (865 aa).

Topologically, residues 1 to 15 are cytoplasmic; the sequence is MVASARVQKLVRRYK. A helical; Signal-anchor for type II membrane protein membrane pass occupies residues 16 to 36; sequence LAIATALAILLLQGLVVWSFS. At 37–865 the chain is on the lumenal side; sequence GLEEDEAGEK…GPVKADGRLR (829 aa). Positions 41 to 157 are disordered; that stretch reads DEAGEKGRQR…EGAPQPTDNG (117 aa). The segment covering 53 to 65 has biased composition (basic and acidic residues); the sequence is RPLDPGEGSKDTD. Basic residues predominate over residues 73 to 82; the sequence is STGRRHGRWR. An N-linked (GlcNAc...) asparagine glycan is attached at Asn122. Positions 125–137 are enriched in low complexity; sequence GAAAGEALVGAAG. 4 disulfides stabilise this stretch: Cys162/Cys190, Cys206/Cys448, Cys467/Cys480, and Cys469/Cys478. UDP-alpha-D-xylose-binding positions include Val239, Asp267, and 296 to 298; that span reads TIW. A glycan (N-linked (GlcNAc...) asparagine) is linked at Asn327. 400–401 is a binding site for UDP-alpha-D-xylose; the sequence is DW. UDP-alpha-D-xylose contacts are provided by residues Ser481 and 504-505; that span reads RK. 2 disulfide bridges follow: Cys581–Cys833 and Cys826–Cys839. Asn683 is a glycosylation site (N-linked (GlcNAc...) asparagine). The segment at 846–865 is disordered; it reads SLSPDPKSELGPVKADGRLR.

The protein belongs to the glycosyltransferase 14 family. XylT subfamily. In terms of assembly, monomer. Mg(2+) serves as cofactor. The cofactor is Mn(2+). Post-translationally, contains disulfide bonds.

It localises to the golgi apparatus membrane. The protein resides in the secreted. It catalyses the reaction UDP-alpha-D-xylose + L-seryl-[protein] = 3-O-(beta-D-xylosyl)-L-seryl-[protein] + UDP + H(+). Its pathway is glycan metabolism; chondroitin sulfate biosynthesis. It functions in the pathway glycan metabolism; heparan sulfate biosynthesis. Functionally, catalyzes the first step in the biosynthesis of chondroitin sulfate, heparan sulfate and dermatan sulfate proteoglycans, such as DCN. Transfers D-xylose from UDP-D-xylose to specific serine residues of the core protein. The polypeptide is Xylosyltransferase 2 (XYLT2) (Pan troglodytes (Chimpanzee)).